Consider the following 413-residue polypeptide: Alpha-1-antitrypsin 1-4 (413 aa).

Residues 1–24 (MTPSISWSLLLLAGLCCLVPSFLA) form the signal peptide. Residues Asn-64, Asn-101, and Asn-265 are each glycosylated (N-linked (GlcNAc...) asparagine). The tract at residues 368-387 (AATVLQVATYSMPPIVRFDH) is RCL.

Belongs to the serpin family.

Its subcellular location is the secreted. Its function is as follows. Inhibitor of serine proteases. Can inhibit trypsin and chymotrypsin; relatively ineffective against elastase. This chain is Alpha-1-antitrypsin 1-4 (Serpina1d), found in Mus musculus (Mouse).